The primary structure comprises 121 residues: Large ribosomal subunit protein uL22 (121 aa).

The protein belongs to the universal ribosomal protein uL22 family. In terms of assembly, part of the 50S ribosomal subunit.

Its function is as follows. This protein binds specifically to 23S rRNA; its binding is stimulated by other ribosomal proteins, e.g. L4, L17, and L20. It is important during the early stages of 50S assembly. It makes multiple contacts with different domains of the 23S rRNA in the assembled 50S subunit and ribosome. In terms of biological role, the globular domain of the protein is located near the polypeptide exit tunnel on the outside of the subunit, while an extended beta-hairpin is found that lines the wall of the exit tunnel in the center of the 70S ribosome. In Pseudarthrobacter chlorophenolicus (strain ATCC 700700 / DSM 12829 / CIP 107037 / JCM 12360 / KCTC 9906 / NCIMB 13794 / A6) (Arthrobacter chlorophenolicus), this protein is Large ribosomal subunit protein uL22.